Reading from the N-terminus, the 676-residue chain is tRNA 5-methylaminomethyl-2-thiouridine biosynthesis bifunctional protein MnmC (676 aa).

A tRNA (mnm(5)s(2)U34)-methyltransferase region spans residues 1 to 241 (MFTVTPAKIY…KRECLCGIKN (241 aa)). The tract at residues 268–676 (IGGGIASLFT…RKLLKGTEIK (409 aa)) is FAD-dependent cmnm(5)s(2)U34 oxidoreductase.

This sequence in the N-terminal section; belongs to the methyltransferase superfamily. tRNA (mnm(5)s(2)U34)-methyltransferase family. In the C-terminal section; belongs to the DAO family. It depends on FAD as a cofactor.

The protein localises to the cytoplasm. It catalyses the reaction 5-aminomethyl-2-thiouridine(34) in tRNA + S-adenosyl-L-methionine = 5-methylaminomethyl-2-thiouridine(34) in tRNA + S-adenosyl-L-homocysteine + H(+). Its function is as follows. Catalyzes the last two steps in the biosynthesis of 5-methylaminomethyl-2-thiouridine (mnm(5)s(2)U) at the wobble position (U34) in tRNA. Catalyzes the FAD-dependent demodification of cmnm(5)s(2)U34 to nm(5)s(2)U34, followed by the transfer of a methyl group from S-adenosyl-L-methionine to nm(5)s(2)U34, to form mnm(5)s(2)U34. This is tRNA 5-methylaminomethyl-2-thiouridine biosynthesis bifunctional protein MnmC from Histophilus somni (strain 129Pt) (Haemophilus somnus).